Reading from the N-terminus, the 420-residue chain is Glycogen synthase kinase-3 beta (420 aa).

A compositionally biased stretch (polar residues) spans 1–24; the sequence is MSGRPRTTSFAESCKPVQQPSSFG. A disordered region spans residues 1–50; it reads MSGRPRTTSFAESCKPVQQPSSFGSMKVSRDKDGSKVTTVVATPGQGPDR. The 285-residue stretch at 56 to 340 folds into the Protein kinase domain; it reads YTDTKVIGNG…PLDACAHSFF (285 aa). ATP contacts are provided by residues 62–70 and Lys85; that span reads IGNGSFGVV. The active-site Proton acceptor is the Asp181. Residues 384–420 form a disordered region; sequence NQAAVSTTSNTTSTSDSNTGERGSTNNAASASASNSS. Composition is skewed to low complexity over residues 389 to 401 and 409 to 420; these read STTS…SDSN and NNAASASASNSS.

The protein belongs to the protein kinase superfamily. CMGC Ser/Thr protein kinase family. GSK-3 subfamily. In terms of processing, phosphorylated. Activated by phosphorylation at Tyr-216.

The protein localises to the cytoplasm. It localises to the nucleus. The protein resides in the cell membrane. It carries out the reaction L-seryl-[tau protein] + ATP = O-phospho-L-seryl-[tau protein] + ADP + H(+). The enzyme catalyses L-threonyl-[tau protein] + ATP = O-phospho-L-threonyl-[tau protein] + ADP + H(+). In terms of biological role, plays a role in the organization of the formation of the main body axis of developing embryo. Acts as an inhibitor of differentiation of primary neurons. Inhibits the ability of ectopically expressed NEUROD1 and other bHLH factors to promote early retinal cell differentiation. May participate in the Wnt signaling pathway. May regulate the circadian clock via phosphorylation of the major clock components. The chain is Glycogen synthase kinase-3 beta (gsk3b) from Xenopus laevis (African clawed frog).